We begin with the raw amino-acid sequence, 554 residues long: Intraflagellar transport protein 56 (554 aa).

A disordered region spans residues 1–24 (MMLSRAKPAVGRGVQHTDKRKKKG). 4 TPR repeats span residues 57 to 90 (EDTNLWIGYCAFHLGDYKRALEEYENATKEENCN), 92 to 125 (EVWVNLACTYFFLGMYKQAEAAGFKASKSRLQNR), 151 to 184 (TEDQLSLASIHYMRSHYQEAIDIYKRILLDNREY), and 468 to 501 (ANDCYKMGQFYYSAKAFDVLERLDPNPEYWEGKR).

Belongs to the IFT56 family. In terms of assembly, component of the IFT complex B. Interacts with IFT46; the interaction is direct.

It localises to the cell projection. The protein resides in the cilium. Its function is as follows. Component of the intraflagellar transport (IFT) complex B required for transport of proteins in the motile cilium. Required for transport of specific ciliary cargo proteins related to motility, while it is neither required for IFT complex B assembly or motion nor for cilium assembly. Required for efficient coupling between the accumulation of GLI2 and GLI3 at the ciliary tips and their dissociation from the negative regulator SUFU. Plays a key role in maintaining the integrity of the IFT complex B and the proper ciliary localization of the IFT complex B components. Not required for IFT complex A ciliary localization or function. Essential for maintaining proper microtubule organization within the ciliary axoneme. This Homo sapiens (Human) protein is Intraflagellar transport protein 56.